The following is a 407-amino-acid chain: Tryptophan synthase beta chain (407 aa).

At Lys-91 the chain carries N6-(pyridoxal phosphate)lysine.

This sequence belongs to the TrpB family. As to quaternary structure, tetramer of two alpha and two beta chains. The cofactor is pyridoxal 5'-phosphate.

The catalysed reaction is (1S,2R)-1-C-(indol-3-yl)glycerol 3-phosphate + L-serine = D-glyceraldehyde 3-phosphate + L-tryptophan + H2O. The protein operates within amino-acid biosynthesis; L-tryptophan biosynthesis; L-tryptophan from chorismate: step 5/5. Its function is as follows. The beta subunit is responsible for the synthesis of L-tryptophan from indole and L-serine. The sequence is that of Tryptophan synthase beta chain from Streptococcus pneumoniae (strain JJA).